Consider the following 1081-residue polypeptide: Histone demethylase-like protein A (1081 aa).

Positions 37 to 173 (QHLQHPSLPN…LSGNTDYARY (137 aa)) are disordered. Residues 66-81 (SPSCNESNESNGETSS) show a composition bias toward low complexity. Residues 119–132 (DTSNILSGSATSVS) are compositionally biased toward polar residues. Low complexity predominate over residues 141–161 (NSTPPSTVNNVPSSSSITSDS). Residues 192 to 287 (CVTAAYACRL…FGCVEIPPAL (96 aa)) enclose the SWIRM domain. The interval 902–940 (ATAQKKKEPPCSNGFSAPVSTSAHPTDASAPARSNNSFS) is disordered. Residues 914-925 (NGFSAPVSTSAH) are compositionally biased toward polar residues. The segment at residues 969-1049 (ARTGLNPFLL…TNTEIWDRWK (81 aa)) is a DNA-binding region (HMG box).

It belongs to the flavin monoamine oxidase family.

It is found in the nucleus. Functionally, H3K4 demethylase-like protein. Might not act as a H3K4 demethylase or is not the major H3K4 demethylase since its deletion does not affect whole genome H3K4 methylation. This chain is Histone demethylase-like protein A, found in Aspergillus fumigatus (strain ATCC MYA-4609 / CBS 101355 / FGSC A1100 / Af293) (Neosartorya fumigata).